The chain runs to 454 residues: MTVNSKRIPFGKPMLEAFCMDPEYTNLNSSSCGSWPKVVSKQIRDYWSLLEAQPDLFSEFSQGLVLQEARIGLAHLVHAAVSECVLVSNVTTGIFTVLYNQAFEERDVVVTLSTTYGAIDHGITSLAETRPFKTRRVEFELPTTGQKIVSQFETAMAQIRADGLRPRLAILETIVSIPAVRMPFEDLLRVCQKEGIMTLVDGAHSVGQFEVNLQELQPDFFVSDCHKWLFVPRPCAVLYVAERNQHMMRSVIPTSFGFIPKNGNSRLPLWSQMVSASETASSFETLFAYTATSDYMPHLCIPAALRFRRDVCGGEAAIYEYIKWLAKEGGDKIADILQTEVLEEPGLGAGVDGQMRNCGIVTVRLPLAIATGPSTAPAHVPGGALTEKEVGPAVRYLTKALAERYKTWIPIIDYRGWIWARLCAQVYLEVSDFEMAGNSLKVICEEILNREMGQ.

The residue at position 227 (Lys-227) is an N6-(pyridoxal phosphate)lysine.

It belongs to the class-V pyridoxal-phosphate-dependent aminotransferase family. It depends on pyridoxal 5'-phosphate as a cofactor.

It functions in the pathway alkaloid biosynthesis. L-cysteine desulfhydrase-like protein; part of the gene cluster that mediates the biosynthesis of loline alkaloids, potent insecticidal agents composed of a pyrrolizidine ring system and an uncommon ether bridge linking carbons 2 and 7. Lolines are structurally differentiated by the various modifications of the L-amino group and include norloline, loline, N-methylloline, N-acetylloline, N-acetylnorloline, and N-formylloline. The first committed step is the condensation of O-acetyl-L-homoserine (derived from L-aspartic acid) and L-proline, probably catalyzed by the gamma-type pyridoxal 5'-phosphate(PLP)-dependent enzyme lolC, to give the diamino diacid, NACPP. Ensuing cyclization, decarboxylation, and acetylation steps yield 1-exo-acetamidopyrrolizidine (AcAP). LolO is required for installation of the ether bridge upon the pathway intermediate, 1-exo-acetamidopyrrolizidine (AcAP). In sequential 2-oxoglutarate- and O(2)-consuming steps, lolO removes hydrogens from C2 and C7 of AcAP to form both carbon-oxygen bonds in N-acetylnorloline (NANL), the precursor to all other lolines. The enzymes lolD, lolE, lolF and lolT have also been proposed to be involved in the ether-bridge installation. Further processing of the exocyclic moiety of NANL by fungal N-acetamidase (LolN), methyltransferase (LolM), and cytochrome P450 (LolP) enzymes, with occasional involvement of a plant acetyltransferase, generates the other known lolines. LolN transforms NANL to norlonine which is monomethylated and dimethylated to respectively lonine and N-methyllonine (NML) by lolM. LolP catalyzes hydroxylation of the methyl group in N-methylloline (NML) and further oxygenation to N-formylloline (NFL). A plant acetyltransferase is responsible for the acetylation of loline to form N-acetylloline (NAL). LolA might interact with aspartate kinase to prevent feedback inhibition of its activity by these end products and thereby promote production of L-homoserine from L-aspartate. The sequence is that of L-cysteine desulfhydrase-like protein lolT1 from Epichloe uncinata (Endophyte fungus).